Here is an 861-residue protein sequence, read N- to C-terminus: E3 ubiquitin-protein ligase SH3RF1 (861 aa).

The RING-type zinc finger occupies 12-53; that stretch reads CPVCLERLDASAKVLPCQHTFCKRCLLGIVSSRNELRCPECR. SH3 domains are found at residues 132–191 and 194–257; these read PQLP…IIKP and QPPP…FNSA. The segment at 268–319 is disordered; the sequence is SGVDTGEGSSGTTHSSNSQKQADAKKNTKKRHSFTSLTMSNKSSQSVQNRHS. The segment covering 273–285 has biased composition (low complexity); the sequence is GEGSSGTTHSSNS. Polar residues predominate over residues 301-317; the sequence is FTSLTMSNKSSQSVQNR. One can recognise an SH3 3 domain in the interval 435 to 496; sequence TRPSVFVAIY…PGNYVAPVTR (62 aa). Residues 684 to 731 are disordered; that stretch reads NSAANKQDKDSKKEKKGLLKLLSGASTKRKPRSSPPHSPTQELEQTNS. The segment covering 689–700 has biased composition (basic and acidic residues); it reads KQDKDSKKEKKG. Residues 802 to 861 form the SH3 4 domain; sequence RPCERYRVVVSYPPQSEAELELKEGDIVFVHKKREDGWFKGTLQRNGKTGLFPGSFVENI.

The protein belongs to the SH3RF family. Post-translationally, autoubiquitinated. Ubiquitinated by SH3RF2, leading to proteasome-mediated degradation.

It localises to the cytoplasm. The protein resides in the perinuclear region. It is found in the cell projection. The protein localises to the lamellipodium. Its subcellular location is the golgi apparatus. It localises to the trans-Golgi network. It carries out the reaction S-ubiquitinyl-[E2 ubiquitin-conjugating enzyme]-L-cysteine + [acceptor protein]-L-lysine = [E2 ubiquitin-conjugating enzyme]-L-cysteine + N(6)-ubiquitinyl-[acceptor protein]-L-lysine.. It functions in the pathway protein modification; protein ubiquitination. Has E3 ubiquitin-protein ligase activity. In the absence of an external substrate, it can catalyze self-ubiquitination. Acts as a scaffold protein that contributes to the effective activation of the JNK signaling pathway. The chain is E3 ubiquitin-protein ligase SH3RF1 (sh3rf1) from Xenopus tropicalis (Western clawed frog).